A 359-amino-acid chain; its full sequence is tRNA-specific 2-thiouridylase MnmA (359 aa).

ATP-binding positions include 9–16 (GISGGVDS) and Met-35. Positions 95–97 (NPD) are interaction with target base in tRNA. The active-site Nucleophile is the Cys-100. Cys-100 and Cys-197 are joined by a disulfide. Residue Gly-124 participates in ATP binding. Residues 147–149 (KDQ) are interaction with tRNA. Cys-197 functions as the Cysteine persulfide intermediate in the catalytic mechanism. The interval 309 to 310 (RY) is interaction with tRNA.

It belongs to the MnmA/TRMU family.

The protein resides in the cytoplasm. The enzyme catalyses S-sulfanyl-L-cysteinyl-[protein] + uridine(34) in tRNA + AH2 + ATP = 2-thiouridine(34) in tRNA + L-cysteinyl-[protein] + A + AMP + diphosphate + H(+). Catalyzes the 2-thiolation of uridine at the wobble position (U34) of tRNA, leading to the formation of s(2)U34. The sequence is that of tRNA-specific 2-thiouridylase MnmA from Francisella tularensis subsp. novicida (strain U112).